The sequence spans 186 residues: Potassium-transporting ATPase KdpC subunit 1 (186 aa).

Residues 10–30 (LTIITMVLCGFLFPLAITLIG) form a helical membrane-spanning segment.

Belongs to the KdpC family. The system is composed of three essential subunits: KdpA, KdpB and KdpC.

The protein resides in the cell membrane. Part of the high-affinity ATP-driven potassium transport (or Kdp) system, which catalyzes the hydrolysis of ATP coupled with the electrogenic transport of potassium into the cytoplasm. This subunit acts as a catalytic chaperone that increases the ATP-binding affinity of the ATP-hydrolyzing subunit KdpB by the formation of a transient KdpB/KdpC/ATP ternary complex. The chain is Potassium-transporting ATPase KdpC subunit 1 from Staphylococcus aureus (strain Mu50 / ATCC 700699).